A 175-amino-acid polypeptide reads, in one-letter code: Disulfide bond formation protein B (175 aa).

Over 1–13 the chain is Cytoplasmic; it reads MVSNWLDAAPRRV. Residues 14–30 traverse the membrane as a helical segment; that stretch reads LALISAACIAMLAFGMY. The Periplasmic segment spans residues 31 to 48; that stretch reads LQHVVGLEPCPMCIVQRY. Cys40 and Cys43 are disulfide-bonded. Residues 49-65 traverse the membrane as a helical segment; the sequence is ALIGVAVFTGLGSLRGG. Residues 66–70 lie on the Cytoplasmic side of the membrane; that stretch reads RGWWM. The helical transmembrane segment at 71–88 threads the bilayer; the sequence is TWGVLALLLSGFGAFVAA. The Periplasmic portion of the chain corresponds to 89-144; sequence RQSWLQWYPPEIATCGRDFYGMIENFPISRAIPMIFRGSGDCAAIDWTFLGGSIAN. Cysteines 103 and 130 form a disulfide. The helical transmembrane segment at 145–163 threads the bilayer; that stretch reads WSFVCFVVMALVLLVMLLR. Over 164 to 175 the chain is Cytoplasmic; that stretch reads APRPARGGFSAA.

The protein belongs to the DsbB family.

The protein resides in the cell inner membrane. In terms of biological role, required for disulfide bond formation in some periplasmic proteins. Acts by oxidizing the DsbA protein. The chain is Disulfide bond formation protein B from Paracidovorax citrulli (strain AAC00-1) (Acidovorax citrulli).